Consider the following 258-residue polypeptide: Calcium release-activated calcium channel protein 1 (258 aa).

Residues 1–63 (MYPECGVETK…SRAKLKASSR (63 aa)) are Cytoplasmic-facing. A helical membrane pass occupies residues 64–81 (TSALLSGFAMVAMVEVQL). Topologically, residues 82–91 (EPNHAYPPGL) are extracellular. The chain crosses the membrane as a helical span at residues 92 to 112 (LIAFSACTTVLVAVHLFALMV). At 113–145 (STCILPNIEAVSNVHNLNSVKESPHERMHHHIE) the chain is on the cytoplasmic side. A helical membrane pass occupies residues 146–166 (LAWAFSTVIGTLLFLAEVVLL). Residues 167 to 192 (CWVKFLPVNSPKISSNETSAVSSGQA) are Extracellular-facing. Residue N182 is glycosylated (N-linked (GlcNAc...) asparagine). A helical transmembrane segment spans residues 193–213 (AAITSTAIMVPFGLVFIVFAV). The Cytoplasmic portion of the chain corresponds to 214-258 (HFYRSLVSHKTDRQFQELNELAELAQLQDQLDHRGDPVQSPVHYA).

It belongs to the Orai family.

Its subcellular location is the cell membrane. Functionally, ca(2+) release-activated Ca(2+) (CRAC) channel subunit which mediates Ca(2+) influx following depletion of intracellular Ca(2+) stores. This is Calcium release-activated calcium channel protein 1 (orai1) from Xenopus laevis (African clawed frog).